A 222-amino-acid polypeptide reads, in one-letter code: Glutathione S-transferase (222 aa).

The region spanning 3–83 (GKPKLHYTRG…YIAGKYNLYG (81 aa)) is the GST N-terminal domain. Glutathione contacts are provided by residues Tyr9, Arg45, 54-55 (QV), and 67-68 (QS). Positions 85-208 (DLKERAWIDM…QPGSQRKPPL (124 aa)) constitute a GST C-terminal domain.

It belongs to the GST superfamily. Alpha family. As to quaternary structure, homodimer.

The protein localises to the cytoplasm. The enzyme catalyses RX + glutathione = an S-substituted glutathione + a halide anion + H(+). In terms of biological role, conjugation of reduced glutathione to a wide number of exogenous and endogenous hydrophobic electrophiles. The chain is Glutathione S-transferase from Gallus gallus (Chicken).